Reading from the N-terminus, the 315-residue chain is L-lactate dehydrogenase (315 aa).

Residues V17, D38, K43, Y69, and 83 to 84 (GA) each bind NAD(+). Residues Q86, R92, and 124–127 (NPVD) each bind substrate. Residues 122–124 (ATN) and S147 each bind NAD(+). Substrate is bound at residue 152–155 (DTAR). Beta-D-fructose 1,6-bisphosphate-binding residues include R157 and H172. The Proton acceptor role is filled by H179. Y224 carries the phosphotyrosine modification. Residue T233 coordinates substrate.

This sequence belongs to the LDH/MDH superfamily. LDH family. Homotetramer.

The protein localises to the cytoplasm. The enzyme catalyses (S)-lactate + NAD(+) = pyruvate + NADH + H(+). It functions in the pathway fermentation; pyruvate fermentation to lactate; (S)-lactate from pyruvate: step 1/1. Its activity is regulated as follows. Allosterically activated by fructose 1,6-bisphosphate (FBP). Catalyzes the conversion of lactate to pyruvate. This is L-lactate dehydrogenase from Bacillus pumilus (strain SAFR-032).